Reading from the N-terminus, the 265-residue chain is Serine protease 1 (265 aa).

The first 21 residues, methionine 1–alanine 21, serve as a signal peptide directing secretion. The propeptide occupies glutamine 22–arginine 35. The Peptidase S1 domain occupies isoleucine 36 to glycine 262. Cysteine 63 and cysteine 79 form a disulfide bridge. Active-site charge relay system residues include histidine 78 and aspartate 123. Cystine bridges form between cysteine 189–cysteine 201 and cysteine 211–cysteine 239. Catalysis depends on serine 215, which acts as the Charge relay system.

This sequence belongs to the peptidase S1 family. As to expression, abundantly expressed in the larval gut.

In terms of biological role, major function may be to aid in digestion. The protein is Serine protease 1 of Drosophila melanogaster (Fruit fly).